We begin with the raw amino-acid sequence, 356 residues long: MKKHNYSAGPSILPQEVFEKASKAVLNFNDSGLSILEISHRSKDFVAVMDEARSLALELLGLQGKGYQALFLQGGASTAFLMAPYNLMKENGKAAYLDSGTWATAAIKEAKLFGETVIVGSSKDDNYTYIPKGYEIPADADYFHCTSNNTIFGTQIQEFPSTNIPVVCDMSSDIFSRELDFSKFDLIYAGAQKNMGPAGTTLVVVKEEILGKNGRTIPSMLDYAKHIKAESMYNTPSVFAVYVSLLTLQWIKAKGGIAAVEKLNNAKADLLYAEIDRNPLFKGAANVEDRSKMNVTFLLNNPEHTETFDALWKAAGISGLPGHRSVGGYRASIYNAMPIESVQVLVDVMKALESKV.

Arg41 is an L-glutamate binding site. Pyridoxal 5'-phosphate-binding positions include 76–77 (AS), Trp102, Thr150, Asp169, and Gln192. Lys193 carries the post-translational modification N6-(pyridoxal phosphate)lysine. Position 234–235 (234–235 (NT)) interacts with pyridoxal 5'-phosphate.

The protein belongs to the class-V pyridoxal-phosphate-dependent aminotransferase family. SerC subfamily. Homodimer. Pyridoxal 5'-phosphate is required as a cofactor.

Its subcellular location is the cytoplasm. It catalyses the reaction O-phospho-L-serine + 2-oxoglutarate = 3-phosphooxypyruvate + L-glutamate. The catalysed reaction is 4-(phosphooxy)-L-threonine + 2-oxoglutarate = (R)-3-hydroxy-2-oxo-4-phosphooxybutanoate + L-glutamate. Its pathway is amino-acid biosynthesis; L-serine biosynthesis; L-serine from 3-phospho-D-glycerate: step 2/3. It functions in the pathway cofactor biosynthesis; pyridoxine 5'-phosphate biosynthesis; pyridoxine 5'-phosphate from D-erythrose 4-phosphate: step 3/5. Catalyzes the reversible conversion of 3-phosphohydroxypyruvate to phosphoserine and of 3-hydroxy-2-oxo-4-phosphonooxybutanoate to phosphohydroxythreonine. The polypeptide is Phosphoserine aminotransferase (Flavobacterium johnsoniae (strain ATCC 17061 / DSM 2064 / JCM 8514 / BCRC 14874 / CCUG 350202 / NBRC 14942 / NCIMB 11054 / UW101) (Cytophaga johnsonae)).